Here is a 570-residue protein sequence, read N- to C-terminus: Urease subunit alpha (570 aa).

One can recognise a Urease domain in the interval 131-570 (GGMDSHIHFI…LPMAQRYFLF (440 aa)). 3 residues coordinate Ni(2+): histidine 136, histidine 138, and lysine 219. At lysine 219 the chain carries N6-carboxylysine. A substrate-binding site is contributed by histidine 221. Ni(2+) is bound by residues histidine 248 and histidine 274. Catalysis depends on histidine 322, which acts as the Proton donor. Aspartate 362 serves as a coordination point for Ni(2+).

The protein belongs to the metallo-dependent hydrolases superfamily. Urease alpha subunit family. Heterotrimer of UreA (gamma), UreB (beta) and UreC (alpha) subunits. Three heterotrimers associate to form the active enzyme. Ni cation serves as cofactor. In terms of processing, carboxylation allows a single lysine to coordinate two nickel ions.

It localises to the cytoplasm. It carries out the reaction urea + 2 H2O + H(+) = hydrogencarbonate + 2 NH4(+). Its pathway is nitrogen metabolism; urea degradation; CO(2) and NH(3) from urea (urease route): step 1/1. This Rhizobium johnstonii (strain DSM 114642 / LMG 32736 / 3841) (Rhizobium leguminosarum bv. viciae) protein is Urease subunit alpha.